Reading from the N-terminus, the 389-residue chain is Type III polyketide synthase 21 (389 aa).

The Nucleophile role is filled by Cys-170.

It belongs to the thiolase-like superfamily. Chalcone/stilbene synthases family. In terms of tissue distribution, expressed in anthers. Expressed in young and adult flowers.

In terms of biological role, plant type III polyketide synthases (PKSs) that catalyzes the condensation of fatty acyl-CoA with malonyl-CoA to generate triketide and tetraketide alpha-pyrones, the main components of pollen exine and potential sporopollenin precursors. The chain is Type III polyketide synthase 21 (PKS21) from Oryza sativa subsp. japonica (Rice).